The following is a 1621-amino-acid chain: ABC transporter A family member 2 (1621 aa).

Helical transmembrane passes span 30 to 50, 234 to 254, 276 to 296, 309 to 329, 338 to 358, 365 to 385, and 405 to 425; these read ILFP…VMAF, SVFI…DLVI, ISWM…ISII, GVVI…AFIL, FCGL…IFVA, GAKL…IFAM, and NQVI…VWYL. In terms of domain architecture, ABC transporter 1 spans 484 to 717; that stretch reads ISIRNLRKEY…FGCGYLLTCS (234 aa). 520-527 lines the ATP pocket; the sequence is GPNGSGKS. Helical transmembrane passes span 856–876, 1033–1053, 1083–1103, 1111–1131, 1142–1162, 1183–1203, and 1227–1247; these read FFLT…MYKA, IVYF…SFAG, VWDY…LAGI, FGLM…LSYL, ATGA…IISL, VDIV…LFLV, and GSPM…IMIL. The region spanning 1293 to 1528 is the ABC transporter 2 domain; it reads LQFRNLHKLF…FGAGYTFDVK (236 aa). Residue 1331 to 1338 coordinates ATP; sequence GLNGAGKT.

Belongs to the ABC transporter superfamily. ABCA family.

The protein resides in the membrane. The polypeptide is ABC transporter A family member 2 (abcA2) (Dictyostelium discoideum (Social amoeba)).